A 494-amino-acid polypeptide reads, in one-letter code: Flap endonuclease 1 (494 aa).

The segment at 1–106 is N-domain; that stretch reads MGIKGLIPFL…KTLEKRRQQR (106 aa). Asp34 provides a ligand contact to Mg(2+). DNA-binding residues include Arg47 and Arg72. The Mg(2+) site is built by Asp88, Glu160, Glu162, Asp181, and Asp183. Residues 124 to 253 are I-domain; it reads SVKKLVGRTV…KTAYSLVKKY (130 aa). Glu160 contributes to the DNA binding site. Residues Gly231 and Asp233 each contribute to the DNA site. Asp233 lines the Mg(2+) pocket. The interaction with PCNA stretch occupies residues 330–338; sequence IQTSLLSFL. 2 disordered regions span residues 341-382 and 395-426; these read PQHN…ESST and LFCEPSNSDNEEDDRGRVDKNEDLFKKSENET. Over residues 408 to 426 the composition is skewed to basic and acidic residues; that stretch reads DRGRVDKNEDLFKKSENET.

It belongs to the XPG/RAD2 endonuclease family. FEN1 subfamily. In terms of assembly, interacts with PCNA. Three molecules of FEN1 bind to one PCNA trimer with each molecule binding to one PCNA monomer. PCNA stimulates the nuclease activity without altering cleavage specificity. Mg(2+) is required as a cofactor. In terms of processing, phosphorylated. Phosphorylation upon DNA damage induces relocalization to the nuclear plasma.

It is found in the nucleus. It localises to the nucleolus. The protein resides in the nucleoplasm. The protein localises to the mitochondrion. In terms of biological role, structure-specific nuclease with 5'-flap endonuclease and 5'-3' exonuclease activities involved in DNA replication and repair. During DNA replication, cleaves the 5'-overhanging flap structure that is generated by displacement synthesis when DNA polymerase encounters the 5'-end of a downstream Okazaki fragment. It enters the flap from the 5'-end and then tracks to cleave the flap base, leaving a nick for ligation. Also involved in the long patch base excision repair (LP-BER) pathway, by cleaving within the apurinic/apyrimidinic (AP) site-terminated flap. Acts as a genome stabilization factor that prevents flaps from equilibrating into structures that lead to duplications and deletions. Also possesses 5'-3' exonuclease activity on nicked or gapped double-stranded DNA, and exhibits RNase H activity. Also involved in replication and repair of rDNA and in repairing mitochondrial DNA. In Theileria parva (East coast fever infection agent), this protein is Flap endonuclease 1.